A 518-amino-acid polypeptide reads, in one-letter code: Protein nucleotidyltransferase YdiU (518 aa).

8 residues coordinate ATP: glycine 100, glycine 102, arginine 103, lysine 123, aspartate 135, glycine 136, arginine 193, and arginine 200. The active-site Proton acceptor is the aspartate 270. 2 residues coordinate Mg(2+): asparagine 271 and aspartate 280. Aspartate 280 serves as a coordination point for ATP.

Belongs to the SELO family. Requires Mg(2+) as cofactor. It depends on Mn(2+) as a cofactor.

The catalysed reaction is L-seryl-[protein] + ATP = 3-O-(5'-adenylyl)-L-seryl-[protein] + diphosphate. It carries out the reaction L-threonyl-[protein] + ATP = 3-O-(5'-adenylyl)-L-threonyl-[protein] + diphosphate. The enzyme catalyses L-tyrosyl-[protein] + ATP = O-(5'-adenylyl)-L-tyrosyl-[protein] + diphosphate. It catalyses the reaction L-histidyl-[protein] + UTP = N(tele)-(5'-uridylyl)-L-histidyl-[protein] + diphosphate. The catalysed reaction is L-seryl-[protein] + UTP = O-(5'-uridylyl)-L-seryl-[protein] + diphosphate. It carries out the reaction L-tyrosyl-[protein] + UTP = O-(5'-uridylyl)-L-tyrosyl-[protein] + diphosphate. Its function is as follows. Nucleotidyltransferase involved in the post-translational modification of proteins. It can catalyze the addition of adenosine monophosphate (AMP) or uridine monophosphate (UMP) to a protein, resulting in modifications known as AMPylation and UMPylation. This is Protein nucleotidyltransferase YdiU from Xanthomonas oryzae pv. oryzae (strain MAFF 311018).